Consider the following 25-residue polypeptide: Caerin-1.19 (25 aa).

Residue leucine 25 is modified to Leucine amide.

It belongs to the frog skin active peptide (FSAP) family. Caerin subfamily. As to expression, expressed by the skin dorsal glands.

Its subcellular location is the secreted. Functionally, caerin-1.19 shows significant activity against Gram-positive organisms, but is less effective against Gram-negative organisms. This Ranoidea gracilenta (Dainty green tree frog) protein is Caerin-1.19.